A 409-amino-acid chain; its full sequence is Adenosine receptor A2a (409 aa).

The Extracellular portion of the chain corresponds to 1–4; it reads MSSS. A helical membrane pass occupies residues 5–29; the sequence is VYITVELVIAVLAILGNVLVCWAVW. The Cytoplasmic portion of the chain corresponds to 30–39; sequence INSNLQNVTN. Residues 40 to 63 form a helical membrane-spanning segment; that stretch reads YFVVSLAAADIAVGVLAIPFAITI. Residues 64–74 lie on the Extracellular side of the membrane; it reads STGFCAACHGC. 3 disulfides stabilise this stretch: C68-C156, C71-C143, and C74-C163. The helical transmembrane segment at 75–97 threads the bilayer; the sequence is LFFACFVLVLTQSSIFSLLTITI. At 98 to 117 the chain is on the cytoplasmic side; it reads DRYIAIRIPLRYNGLVTCTR. A helical transmembrane segment spans residues 118-140; that stretch reads AKGIIAICWVLSFAIGLTPMLGW. Residues 141–170 lie on the Extracellular side of the membrane; sequence NNCSQPKGDKNHSESCDEGQVTCLFEDVVP. N-linked (GlcNAc...) asparagine glycosylation is found at N142 and N151. E166 is a binding site for adenosine. A helical transmembrane segment spans residues 171–195; that stretch reads MNYMVYYNFFAFVLVPLLLMLGIYL. Over 196-231 the chain is Cytoplasmic; that stretch reads RIFLAARRQLKQMESQPLPGERTRSTLQKEVHPAKS. The helical transmembrane segment at 232–255 threads the bilayer; sequence LAIIVGLFALCCLPLNIINCFTFF. N250 is an adenosine binding site. Residues C256 and C259 are joined by a disulfide bond. The Extracellular segment spans residues 256 to 263; it reads CPECDHAP. Residues 264-287 form a helical membrane-spanning segment; it reads PWLMYLTIILSHGNSVVNPLIYAY. The adenosine site is built by S274 and H275. Residues 288–409 lie on the Cytoplasmic side of the membrane; it reads RIREFRQTFR…PPAHGGAGVS (122 aa). 2 disordered regions span residues 316 to 336 and 369 to 409; these read TSARASAAHSPEGEQVSLRLN and QRSH…AGVS.

Belongs to the G-protein coupled receptor 1 family. In terms of assembly, interacts (via cytoplasmic C-terminal domain) with USP4; the interaction is direct. May interact with DRD4. Interacts with NECAB2. Interacts (via cytoplasmic C-terminal domain) with GAS2L2; interaction enhances receptor-mediated adenylyl cyclase activity. Ubiquitinated. Deubiquitinated by USP4; leading to stabilization and expression at the cell surface.

It localises to the cell membrane. Functionally, receptor for adenosine. The activity of this receptor is mediated by G proteins which activate adenylyl cyclase. In Cavia porcellus (Guinea pig), this protein is Adenosine receptor A2a (ADORA2A).